Reading from the N-terminus, the 319-residue chain is Ribonuclease Z (319 aa).

Positions 62, 64, 66, 67, 145, 216, and 274 each coordinate Zn(2+). Catalysis depends on D66, which acts as the Proton acceptor.

Belongs to the RNase Z family. As to quaternary structure, homodimer. Zn(2+) serves as cofactor.

It catalyses the reaction Endonucleolytic cleavage of RNA, removing extra 3' nucleotides from tRNA precursor, generating 3' termini of tRNAs. A 3'-hydroxy group is left at the tRNA terminus and a 5'-phosphoryl group is left at the trailer molecule.. Zinc phosphodiesterase, which displays some tRNA 3'-processing endonuclease activity. Probably involved in tRNA maturation, by removing a 3'-trailer from precursor tRNA. This Synechococcus sp. (strain CC9902) protein is Ribonuclease Z.